Here is a 525-residue protein sequence, read N- to C-terminus: GMP synthase [glutamine-hydrolyzing] (525 aa).

Residues 8–207 enclose the Glutamine amidotransferase type-1 domain; it reads KILILDFGSQ…ALEICGCPAN (200 aa). The active-site Nucleophile is cysteine 85. Active-site residues include histidine 181 and glutamate 183. The GMPS ATP-PPase domain occupies 208 to 400; the sequence is WKPSSIIEDA…LGLPYDMLYR (193 aa). Residue 235–241 participates in ATP binding; sequence SGGVDSS.

As to quaternary structure, homodimer.

The catalysed reaction is XMP + L-glutamine + ATP + H2O = GMP + L-glutamate + AMP + diphosphate + 2 H(+). It functions in the pathway purine metabolism; GMP biosynthesis; GMP from XMP (L-Gln route): step 1/1. Functionally, catalyzes the synthesis of GMP from XMP. The protein is GMP synthase [glutamine-hydrolyzing] of Shewanella pealeana (strain ATCC 700345 / ANG-SQ1).